The following is a 132-amino-acid chain: Small ribosomal subunit protein uS8 (132 aa).

Belongs to the universal ribosomal protein uS8 family. As to quaternary structure, part of the 30S ribosomal subunit. Contacts proteins S5 and S12.

Functionally, one of the primary rRNA binding proteins, it binds directly to 16S rRNA central domain where it helps coordinate assembly of the platform of the 30S subunit. This is Small ribosomal subunit protein uS8 from Clostridium tetani (strain Massachusetts / E88).